The primary structure comprises 478 residues: ATP synthase subunit beta (478 aa).

Residue 152–159 (GGAGVGKT) participates in ATP binding.

This sequence belongs to the ATPase alpha/beta chains family. As to quaternary structure, F-type ATPases have 2 components, CF(1) - the catalytic core - and CF(0) - the membrane proton channel. CF(1) has five subunits: alpha(3), beta(3), gamma(1), delta(1), epsilon(1). CF(0) has three main subunits: a(1), b(2) and c(9-12). The alpha and beta chains form an alternating ring which encloses part of the gamma chain. CF(1) is attached to CF(0) by a central stalk formed by the gamma and epsilon chains, while a peripheral stalk is formed by the delta and b chains.

The protein localises to the cell membrane. The enzyme catalyses ATP + H2O + 4 H(+)(in) = ADP + phosphate + 5 H(+)(out). Functionally, produces ATP from ADP in the presence of a proton gradient across the membrane. The catalytic sites are hosted primarily by the beta subunits. In Wolbachia pipientis subsp. Culex pipiens (strain wPip), this protein is ATP synthase subunit beta.